Here is a 200-residue protein sequence, read N- to C-terminus: Elongation factor Ts (200 aa).

The segment at threonine 80 to valine 83 is involved in Mg(2+) ion dislocation from EF-Tu.

This sequence belongs to the EF-Ts family.

The protein localises to the cytoplasm. Associates with the EF-Tu.GDP complex and induces the exchange of GDP to GTP. It remains bound to the aminoacyl-tRNA.EF-Tu.GTP complex up to the GTP hydrolysis stage on the ribosome. This Caldanaerobacter subterraneus subsp. tengcongensis (strain DSM 15242 / JCM 11007 / NBRC 100824 / MB4) (Thermoanaerobacter tengcongensis) protein is Elongation factor Ts.